A 371-amino-acid polypeptide reads, in one-letter code: Protein-glutamate methylesterase/protein-glutamine glutaminase 3 (371 aa).

The 116-residue stretch at Arg-5–Asp-120 folds into the Response regulatory domain. The residue at position 56 (Asp-56) is a 4-aspartylphosphate. Residues Pro-174–Gln-362 form the CheB-type methylesterase domain. Residues Ser-186, His-213, and Asp-309 contribute to the active site.

It belongs to the CheB family. In terms of processing, phosphorylated by CheA. Phosphorylation of the N-terminal regulatory domain activates the methylesterase activity.

It is found in the cytoplasm. It carries out the reaction [protein]-L-glutamate 5-O-methyl ester + H2O = L-glutamyl-[protein] + methanol + H(+). It catalyses the reaction L-glutaminyl-[protein] + H2O = L-glutamyl-[protein] + NH4(+). Functionally, involved in chemotaxis. Part of a chemotaxis signal transduction system that modulates chemotaxis in response to various stimuli. Catalyzes the demethylation of specific methylglutamate residues introduced into the chemoreceptors (methyl-accepting chemotaxis proteins or MCP) by CheR. Also mediates the irreversible deamidation of specific glutamine residues to glutamic acid. This chain is Protein-glutamate methylesterase/protein-glutamine glutaminase 3, found in Geobacter sulfurreducens (strain ATCC 51573 / DSM 12127 / PCA).